The following is a 2504-amino-acid chain: Fatty acid synthase (2504 aa).

At methionine 1 the chain carries N-acetylmethionine. The Ketosynthase family 3 (KS3) domain maps to 1–406; sequence MEEVVIAGMS…GSNVHVILQP (406 aa). Lysine 59 is subject to N6-acetyllysine. The residue at position 63 (serine 63) is a Phosphoserine. Position 70 is an N6-acetyllysine (lysine 70). Cysteine 161 functions as the For beta-ketoacyl synthase activity in the catalytic mechanism. Position 207 is a phosphoserine (serine 207). Histidine 293 acts as the For beta-ketoacyl synthase activity in catalysis. The residue at position 298 (lysine 298) is an N6-acetyllysine. Catalysis depends on histidine 331, which acts as the For beta-ketoacyl synthase activity. The tract at residues 429–817 is acyl and malonyl transferases; that stretch reads RTLEAVQDLL…INVNPNALFP (389 aa). Residue lysine 528 is modified to N6-acetyllysine. Catalysis depends on serine 581, which acts as the For malonyltransferase activity. Residues 647 to 648 and phenylalanine 671 contribute to the an acyl-CoA site; that span reads DT. N6-acetyllysine is present on lysine 673. Position 725 is a phosphoserine (serine 725). Arginine 773 is a binding site for an acyl-CoA. Lysine 790 is modified (N6-acetyllysine). The segment at 844–967 is N-terminal hotdog fold; that stretch reads VPVAEDFPNG…VYLWEDPNSK (124 aa). Positions 844 to 1104 constitute a PKS/mFAS DH domain; sequence VPVAEDFPNG…ISRLQTTATS (261 aa). Catalysis depends on histidine 878, which acts as the Proton acceptor; for dehydratase activity. A C-terminal hotdog fold region spans residues 982 to 1104; the sequence is SVSRLTQGEV…ISRLQTTATS (123 aa). At lysine 993 the chain carries N6-acetyllysine. Aspartate 1032 serves as the catalytic Proton donor; for dehydratase activity. Residues lysine 1071 and lysine 1276 each carry the N6-acetyllysine modification. Position 1464 is an S-nitrosocysteine (cysteine 1464). 2 positions are modified to phosphoserine: serine 1577 and serine 1587. Residues 1628–1856 are enoyl reductase; sequence DVPSSWTLEE…VQVREEEPEA (229 aa). 1664 to 1681 is a binding site for NADP(+); that stretch reads VLIHSGSGGVGQAAISIA. Position 1697 is an N6-(pyridoxal phosphate)lysine; alternate (lysine 1697). At lysine 1697 the chain carries N6-acetyllysine; alternate. N6-acetyllysine occurs at positions 1764 and 1840. Residues 1857-2111 form a beta-ketoacyl reductase region; that stretch reads VLPGAQPTLI…FVLAEKKAVA (255 aa). 1879–1894 lines the NADP(+) pocket; that stretch reads SYIITGGLGGFGLELA. Lysine 1988 bears the N6-acetyllysine mark. S-nitrosocysteine is present on cysteine 2084. The region spanning 2112-2192 is the Carrier domain; it reads HGDGDTQRDL…EMSSKTDSAT (81 aa). At serine 2150 the chain carries O-(pantetheine 4'-phosphoryl)serine; alternate. Serine 2150 is modified (phosphoserine; alternate). Positions 2181 to 2205 are disordered; that stretch reads LQEMSSKTDSATDTTAPKSRSDTSL. A compositionally biased stretch (low complexity) spans 2185-2198; that stretch reads SSKTDSATDTTAPK. Residues serine 2190 and serine 2229 each carry the phosphoserine modification. The interval 2201 to 2504 is thioesterase; that stretch reads SDTSLKQNQL…AEPRVSVREG (304 aa). Serine 2301 (for thioesterase activity) is an active-site residue. Lysine 2384 is subject to N6-acetyllysine. Lysine 2442 is covalently cross-linked (Glycyl lysine isopeptide (Lys-Gly) (interchain with G-Cter in SUMO2)). Residue histidine 2474 is the For thioesterase activity of the active site.

In terms of assembly, homodimer which is arranged in a head to tail fashion. Interacts with CEACAM1; this interaction is insulin and phosphorylation-dependent; reduces fatty-acid synthase activity. In terms of processing, S-nitrosylation of Fatty acid synthase at cysteine residues Cys-1464 or Cys-2084 is important for the enzyme dimerization. In adipocytes, S-nitrosylation of Fatty acid synthase occurs under physiological conditions and gradually increases during adipogenesis.

It localises to the cytoplasm. The protein localises to the melanosome. The catalysed reaction is acetyl-CoA + n malonyl-CoA + 2n NADPH + 2n H(+) = a long-chain fatty acid + (n+1) CoA + n CO2 + 2n NADP(+).. It catalyses the reaction holo-[ACP] + acetyl-CoA = acetyl-[ACP] + CoA. The enzyme catalyses holo-[ACP] + malonyl-CoA = malonyl-[ACP] + CoA. It carries out the reaction a fatty acyl-[ACP] + malonyl-[ACP] + H(+) = a 3-oxoacyl-[ACP] + holo-[ACP] + CO2. The catalysed reaction is a (3R)-hydroxyacyl-[ACP] + NADP(+) = a 3-oxoacyl-[ACP] + NADPH + H(+). It catalyses the reaction a (3R)-hydroxyacyl-[ACP] = a (2E)-enoyl-[ACP] + H2O. The enzyme catalyses a 2,3-saturated acyl-[ACP] + NADP(+) = a (2E)-enoyl-[ACP] + NADPH + H(+). It carries out the reaction hexadecanoyl-[ACP] + H2O = hexadecanoate + holo-[ACP] + H(+). The catalysed reaction is acetyl-[ACP] + malonyl-[ACP] + H(+) = 3-oxobutanoyl-[ACP] + holo-[ACP] + CO2. It catalyses the reaction 3-oxobutanoyl-[ACP] + NADPH + H(+) = (3R)-hydroxybutanoyl-[ACP] + NADP(+). The enzyme catalyses (3R)-hydroxybutanoyl-[ACP] = (2E)-butenoyl-[ACP] + H2O. It carries out the reaction (2E)-butenoyl-[ACP] + NADPH + H(+) = butanoyl-[ACP] + NADP(+). The catalysed reaction is butanoyl-[ACP] + malonyl-[ACP] + H(+) = 3-oxohexanoyl-[ACP] + holo-[ACP] + CO2. It catalyses the reaction 3-oxohexanoyl-[ACP] + NADPH + H(+) = (3R)-hydroxyhexanoyl-[ACP] + NADP(+). The enzyme catalyses (3R)-hydroxyhexanoyl-[ACP] = (2E)-hexenoyl-[ACP] + H2O. It carries out the reaction (2E)-hexenoyl-[ACP] + NADPH + H(+) = hexanoyl-[ACP] + NADP(+). The catalysed reaction is hexanoyl-[ACP] + malonyl-[ACP] + H(+) = 3-oxooctanoyl-[ACP] + holo-[ACP] + CO2. It catalyses the reaction 3-oxooctanoyl-[ACP] + NADPH + H(+) = (3R)-hydroxyoctanoyl-[ACP] + NADP(+). The enzyme catalyses (3R)-hydroxyoctanoyl-[ACP] = (2E)-octenoyl-[ACP] + H2O. It carries out the reaction (2E)-octenoyl-[ACP] + NADPH + H(+) = octanoyl-[ACP] + NADP(+). The catalysed reaction is octanoyl-[ACP] + malonyl-[ACP] + H(+) = 3-oxodecanoyl-[ACP] + holo-[ACP] + CO2. It catalyses the reaction 3-oxodecanoyl-[ACP] + NADPH + H(+) = (3R)-hydroxydecanoyl-[ACP] + NADP(+). The enzyme catalyses (3R)-hydroxydecanoyl-[ACP] = (2E)-decenoyl-[ACP] + H2O. It carries out the reaction (2E)-decenoyl-[ACP] + NADPH + H(+) = decanoyl-[ACP] + NADP(+). The catalysed reaction is decanoyl-[ACP] + malonyl-[ACP] + H(+) = 3-oxododecanoyl-[ACP] + holo-[ACP] + CO2. It catalyses the reaction 3-oxododecanoyl-[ACP] + NADPH + H(+) = (3R)-hydroxydodecanoyl-[ACP] + NADP(+). The enzyme catalyses (3R)-hydroxydodecanoyl-[ACP] = (2E)-dodecenoyl-[ACP] + H2O. It carries out the reaction (2E)-dodecenoyl-[ACP] + NADPH + H(+) = dodecanoyl-[ACP] + NADP(+). The catalysed reaction is dodecanoyl-[ACP] + malonyl-[ACP] + H(+) = 3-oxotetradecanoyl-[ACP] + holo-[ACP] + CO2. It catalyses the reaction 3-oxotetradecanoyl-[ACP] + NADPH + H(+) = (3R)-hydroxytetradecanoyl-[ACP] + NADP(+). The enzyme catalyses (3R)-hydroxytetradecanoyl-[ACP] = (2E)-tetradecenoyl-[ACP] + H2O. It carries out the reaction (2E)-tetradecenoyl-[ACP] + NADPH + H(+) = tetradecanoyl-[ACP] + NADP(+). The catalysed reaction is tetradecanoyl-[ACP] + malonyl-[ACP] + H(+) = 3-oxohexadecanoyl-[ACP] + holo-[ACP] + CO2. It catalyses the reaction 3-oxohexadecanoyl-[ACP] + NADPH + H(+) = (3R)-hydroxyhexadecanoyl-[ACP] + NADP(+). The enzyme catalyses (3R)-hydroxyhexadecanoyl-[ACP] = (2E)-hexadecenoyl-[ACP] + H2O. It carries out the reaction (2E)-hexadecenoyl-[ACP] + NADPH + H(+) = hexadecanoyl-[ACP] + NADP(+). The catalysed reaction is hexadecanoyl-[ACP] + malonyl-[ACP] + H(+) = 3-oxooctadecanoyl-[ACP] + holo-[ACP] + CO2. It catalyses the reaction 3-oxooctadecanoyl-[ACP] + NADPH + H(+) = (3R)-hydroxyoctadecanoyl-[ACP] + NADP(+). The enzyme catalyses (3R)-hydroxyoctadecanoyl-[ACP] = (2E)-octadecenoyl-[ACP] + H2O. It carries out the reaction (2E)-octadecenoyl-[ACP] + NADPH + H(+) = octadecanoyl-[ACP] + NADP(+). The catalysed reaction is tetradecanoyl-[ACP] + H2O = tetradecanoate + holo-[ACP] + H(+). The protein operates within lipid metabolism; fatty acid biosynthesis. Fatty acid synthetase is a multifunctional enzyme that catalyzes the de novo biosynthesis of long-chain saturated fatty acids starting from acetyl-CoA and malonyl-CoA in the presence of NADPH. This multifunctional protein contains 7 catalytic activities and a site for the binding of the prosthetic group 4'-phosphopantetheine of the acyl carrier protein ([ACP]) domain. This Mus musculus (Mouse) protein is Fatty acid synthase (Fasn).